A 134-amino-acid chain; its full sequence is D-ribose pyranase (134 aa).

The Proton donor role is filled by histidine 20. Substrate contacts are provided by residues aspartate 28, histidine 99, and 123 to 125 (YSN).

Belongs to the RbsD / FucU family. RbsD subfamily. Homodecamer.

The protein resides in the cytoplasm. It catalyses the reaction beta-D-ribopyranose = beta-D-ribofuranose. Its pathway is carbohydrate metabolism; D-ribose degradation; D-ribose 5-phosphate from beta-D-ribopyranose: step 1/2. Functionally, catalyzes the interconversion of beta-pyran and beta-furan forms of D-ribose. The sequence is that of D-ribose pyranase from Staphylococcus aureus (strain USA300).